The chain runs to 302 residues: Protein transport protein SEC13 homolog B (302 aa).

6 WD repeats span residues 9–48, 54–95, 101–142, 148–201, 208–251, and 257–296; these read GHEDIVHDVQMDYYGKRIATASSDCTIKITGVSNNGGSQQ, GHRG…QWTQ, DHKS…GWDT, AHPV…WKMD, KHTD…EQWE, and DFMTPVWRVSWSLTGNLLAVSDGNNNVTVWKEAVDGEWEQ.

This sequence belongs to the WD repeat SEC13 family. As to quaternary structure, part of the nuclear pore complex (NPC). The NPC has an eight-fold symmetrical structure comprising a central transport channel and two rings, the cytoplasmic and nuclear rings, to which eight filaments are attached. The cytoplasmic filaments have loose ends, while the nuclear filaments are joined in a distal ring, forming a nuclear basket. NPCs are highly dynamic in configuration and composition, and can be devided in 3 subcomplexes, the NUP62 subcomplex, the NUP107-160 subcomplex and the NUP93 subcomplex, containing approximately 30 different nucleoporin proteins. Interacts with MAG5, SEC31A and SEC31B.

Its subcellular location is the golgi apparatus. The protein resides in the endoplasmic reticulum. It localises to the nucleus envelope. It is found in the nucleus. The protein localises to the nuclear pore complex. Required for protein transport from the endoplasmic reticulum to the Golgi apparatus. The polypeptide is Protein transport protein SEC13 homolog B (Arabidopsis thaliana (Mouse-ear cress)).